The chain runs to 144 residues: 3-hydroxyacyl-[acyl-carrier-protein] dehydratase FabZ (144 aa).

His-51 is a catalytic residue.

Belongs to the thioester dehydratase family. FabZ subfamily.

Its subcellular location is the cytoplasm. The enzyme catalyses a (3R)-hydroxyacyl-[ACP] = a (2E)-enoyl-[ACP] + H2O. Involved in unsaturated fatty acids biosynthesis. Catalyzes the dehydration of short chain beta-hydroxyacyl-ACPs and long chain saturated and unsaturated beta-hydroxyacyl-ACPs. The sequence is that of 3-hydroxyacyl-[acyl-carrier-protein] dehydratase FabZ (fabZ2) from Lactococcus lactis subsp. lactis (strain IL1403) (Streptococcus lactis).